Here is a 364-residue protein sequence, read N- to C-terminus: Chorismate synthase (364 aa).

The NADP(+) site is built by R48 and R54. Residues 125–127 (RSS), G282, 297–301 (KPPAS), and R323 contribute to the FMN site.

Belongs to the chorismate synthase family. Homotetramer. FMNH2 serves as cofactor.

It catalyses the reaction 5-O-(1-carboxyvinyl)-3-phosphoshikimate = chorismate + phosphate. Its pathway is metabolic intermediate biosynthesis; chorismate biosynthesis; chorismate from D-erythrose 4-phosphate and phosphoenolpyruvate: step 7/7. Functionally, catalyzes the anti-1,4-elimination of the C-3 phosphate and the C-6 proR hydrogen from 5-enolpyruvylshikimate-3-phosphate (EPSP) to yield chorismate, which is the branch point compound that serves as the starting substrate for the three terminal pathways of aromatic amino acid biosynthesis. This reaction introduces a second double bond into the aromatic ring system. This chain is Chorismate synthase, found in Chloroflexus aggregans (strain MD-66 / DSM 9485).